The sequence spans 345 residues: Phosphoribosylformylglycinamidine cyclo-ligase (345 aa).

This sequence belongs to the AIR synthase family.

The protein resides in the cytoplasm. It catalyses the reaction 2-formamido-N(1)-(5-O-phospho-beta-D-ribosyl)acetamidine + ATP = 5-amino-1-(5-phospho-beta-D-ribosyl)imidazole + ADP + phosphate + H(+). Its pathway is purine metabolism; IMP biosynthesis via de novo pathway; 5-amino-1-(5-phospho-D-ribosyl)imidazole from N(2)-formyl-N(1)-(5-phospho-D-ribosyl)glycinamide: step 2/2. This Cronobacter sakazakii (strain ATCC BAA-894) (Enterobacter sakazakii) protein is Phosphoribosylformylglycinamidine cyclo-ligase.